Here is a 439-residue protein sequence, read N- to C-terminus: MGNNQSQGQGDKGEKKDQPKYQPPPPPTQFGKKKKRRGAETSTKLPVITPHSKCKLKQLKLERIKDYLLMEQEFLQNYDLNQPKVDENSKEQADEKIIEELRGDPLTVGNLEEIIDDNHAIVSSTVGPEHYVRIMSFVDKSKLYLGATVLLNNKTLSVVGVIDGEVDPMVNVMKVEKAPTESYSDIGGLEAQVQEMKEAIELPLTHPELYEEIGIKPPKGVILYGEPGTGKTLLAKAVANQTSATFLRVVGSELIQKYLGDGPKLVRELFRVADECAPSIVFIDEIDAVGTKRYDSQSGGEREIQRTMLELLNQLDGFDARTDVKVIMATNRIETLDPALIRPGRIDRKIEFPLPDIKTKRKIFEIHTAKMNLSEDVNLEEFVMSKDDLSGADIKAICTESGLLALRERRMRVTHTDFKKAKEKVLYRKTAGAPEGLYM.

A disordered region spans residues 1–46; it reads MGNNQSQGQGDKGEKKDQPKYQPPPPPTQFGKKKKRRGAETSTKLP. Residue 225 to 232 participates in ATP binding; it reads GEPGTGKT.

This sequence belongs to the AAA ATPase family.

It localises to the cytoplasm. It is found in the nucleus. In terms of biological role, the 26S proteasome is involved in the ATP-dependent degradation of ubiquitinated proteins. The regulatory (or ATPase) complex confers ATP dependency and substrate specificity to the 26S complex. Plays an important role in regulating both growth and multicellular development. This chain is 26S proteasome regulatory subunit 4 homolog (psmC1), found in Dictyostelium discoideum (Social amoeba).